The primary structure comprises 113 residues: Putative membrane protein insertion efficiency factor (113 aa).

It belongs to the UPF0161 family.

The protein localises to the cell inner membrane. Functionally, could be involved in insertion of integral membrane proteins into the membrane. This is Putative membrane protein insertion efficiency factor from Campylobacter curvus (strain 525.92).